The primary structure comprises 61 residues: Large ribosomal subunit protein uL30 (61 aa).

This sequence belongs to the universal ribosomal protein uL30 family. Part of the 50S ribosomal subunit.

This Maricaulis maris (strain MCS10) (Caulobacter maris) protein is Large ribosomal subunit protein uL30.